A 517-amino-acid polypeptide reads, in one-letter code: Protein NETWORKED 4B (517 aa).

Disordered regions lie at residues 1-29 and 101-159; these read MASS…DSHN and LQKN…EDGD. The segment covering 10 to 21 has biased composition (basic residues); that stretch reads KQFKRSMTKKSH. The NAB domain maps to 21-101; sequence HSWWWDSHNC…ERYDQASGEL (81 aa). The span at 107-119 shows a compositional bias: low complexity; sequence SEIQSQSSLEISS. A compositionally biased stretch (basic and acidic residues) spans 121-135; sequence TKEKLSRRQSSHKEE. Residues 156 to 486 adopt a coiled-coil conformation; the sequence is EDGDEALIRR…EQKREAIRQL (331 aa).

It belongs to the NET family.

Plant-specific actin binding protein. May be part of a membrane-cytoskeletal adapter complex. The protein is Protein NETWORKED 4B of Arabidopsis thaliana (Mouse-ear cress).